The primary structure comprises 490 residues: Aspartyl/glutamyl-tRNA(Asn/Gln) amidotransferase subunit B (490 aa).

This sequence belongs to the GatB/GatE family. GatB subfamily. In terms of assembly, heterotrimer of A, B and C subunits.

It catalyses the reaction L-glutamyl-tRNA(Gln) + L-glutamine + ATP + H2O = L-glutaminyl-tRNA(Gln) + L-glutamate + ADP + phosphate + H(+). It carries out the reaction L-aspartyl-tRNA(Asn) + L-glutamine + ATP + H2O = L-asparaginyl-tRNA(Asn) + L-glutamate + ADP + phosphate + 2 H(+). In terms of biological role, allows the formation of correctly charged Asn-tRNA(Asn) or Gln-tRNA(Gln) through the transamidation of misacylated Asp-tRNA(Asn) or Glu-tRNA(Gln) in organisms which lack either or both of asparaginyl-tRNA or glutaminyl-tRNA synthetases. The reaction takes place in the presence of glutamine and ATP through an activated phospho-Asp-tRNA(Asn) or phospho-Glu-tRNA(Gln). In Prochlorococcus marinus subsp. pastoris (strain CCMP1986 / NIES-2087 / MED4), this protein is Aspartyl/glutamyl-tRNA(Asn/Gln) amidotransferase subunit B.